A 1194-amino-acid polypeptide reads, in one-letter code: Multidrug efflux ATP-binding/permease protein Rv0194 (1194 aa).

The next 6 membrane-spanning stretches (helical) occupy residues 20-40 (LLLGFGAALAGTVIAVLVPLV), 56-76 (LAPWAVVLVAAAGATYLLMYV), 130-150 (LLFDVPNVLRHVLTLLLGVAV), 153-173 (WLSVPLALLAVLLVPVIGLIA), 258-278 (FALGGWMAAQGSITVGTFVAF), and 279-299 (WACLTLLARPACDLAGMLTIA). In terms of domain architecture, ABC transmembrane type-1 1 spans 21 to 301 (LLGFGAALAG…LAGMLTIAQQ (281 aa)). The ABC transporter 1 domain occupies 334–568 (LEFQRVSFGY…CPRYRELLSP (235 aa)). Residue 367-374 (GAPGSGKS) participates in ATP binding. The next 6 membrane-spanning stretches (helical) occupy residues 628-648 (ALSLLLVAVQTCAGLLPPLLI), 660-680 (VLSALWWAALAGTATVVIRWV), 743-763 (LVVAVISVVTLVGILVALLAI), 765-785 (ARLVLLIFTTMPVLALATWQF), 847-867 (LLALYYPFVALLCSLATTLVL), and 878-898 (VISVGALVTYLLYIELLYTPI). One can recognise an ABC transmembrane type-1 2 domain in the interval 628 to 910 (ALSLLLVAVQ…LAQMFDDYQR (283 aa)). In terms of domain architecture, ABC transporter 2 spans 942–1177 (VVFDAVHYSY…GGHYSRLWAA (236 aa)). 976–983 (GSTGSGKS) lines the ATP pocket.

It belongs to the ABC transporter superfamily. Lipid exporter (TC 3.A.1.106) family.

Its subcellular location is the cell inner membrane. Its activity is regulated as follows. Efflux is inhibited by reserpine. Its function is as follows. Overexpression in M.smegmatis increases resistance to erythromycin, ampicillin, novobiocin and vancomycin. It also reduces accumulation of ethidium bromide in the cell. This Mycobacterium tuberculosis (strain ATCC 25618 / H37Rv) protein is Multidrug efflux ATP-binding/permease protein Rv0194.